Reading from the N-terminus, the 169-residue chain is Putative adenylate kinase (169 aa).

Gly-10, Gly-12, Lys-13, Thr-14, and Thr-15 together coordinate ATP. An NMP region spans residues 28–51 (HLNDLVGTEGLYDGVDADRGSKIV). The interval 98–108 (DRGDSPEKAAE) is LID. Position 99 (Arg-99) interacts with ATP.

The protein belongs to the adenylate kinase family. AK6 subfamily. In terms of assembly, interacts with uS11. Not a structural component of 40S pre-ribosomes, but transiently interacts with them by binding to uS11.

It carries out the reaction AMP + ATP = 2 ADP. The enzyme catalyses ATP + H2O = ADP + phosphate + H(+). Broad-specificity nucleoside monophosphate (NMP) kinase that catalyzes the reversible transfer of the terminal phosphate group between nucleoside triphosphates and monophosphates. Also has ATPase activity. Involved in the late maturation steps of the 30S ribosomal particles, specifically 16S rRNA maturation. While NMP activity is not required for ribosome maturation, ATPase activity is. Associates transiently with small ribosomal subunit protein uS11. ATP hydrolysis breaks the interaction with uS11. May temporarily remove uS11 from the ribosome to enable a conformational change of the ribosomal RNA that is needed for the final maturation step of the small ribosomal subunit. In Halobacterium salinarum (strain ATCC 29341 / DSM 671 / R1), this protein is Putative adenylate kinase.